The primary structure comprises 971 residues: Protein ALWAYS EARLY 1 (971 aa).

The segment covering 1-11 (MAPTRKSKSVN) has biased composition (basic residues). Disordered regions lie at residues 1-40 (MAPT…LADK), 117-137 (SESE…LKRK), 197-260 (IEDF…MFEN), 326-371 (GLLE…GLED), and 421-507 (PKES…KISL). In terms of domain architecture, SANT spans 40 to 98 (KLGPQWTKRELVRFYDAYRKYVGDWKKVAAAVRNNRSVEMVETLFCMNRAYLSLPEGTA). Composition is skewed to basic and acidic residues over residues 209-219 (KQLDADDDASR), 332-350 (SSPH…KKSN), and 424-440 (STQD…EVDS). The span at 450 to 470 (SSQGPAKQLKTAKTTVESSSA) shows a compositional bias: polar residues.

As to expression, expressed ubiquitously in vegetative and reproductive tissues.

It is found in the nucleus. This is Protein ALWAYS EARLY 1 (ALY1) from Arabidopsis thaliana (Mouse-ear cress).